The following is a 490-amino-acid chain: MNNLESWEAVIGLETHVQLNTKSKIFTSASTAFGDAPNTHIDPVVCGLPGTLPVLNETVLEYAVKTSLALNLNVAEHCKFDRKQYFYPDLPKNYQISQFDEPLAENGWLEVEIIEKDKDPYTKKIGIERLHMEEDAGKLVHSGSDRLAGSKYSLVDYNRAGIALCEIVSKPDIRTGREAAEYASEIRRTVRYLGVSDGNMQEGSLRCDVNISVRKGPNAPFGTKVEIKNMNSFSAIQKACDYEIARQIEVYENGGEIFQETRLWDEAKQLTKSMRLKEGSSDYRYFPDPDLGPIEITKAQKEIWFNELPELPSKKRNKYVNEFGLSAYDARVISDEINMANFFEETVANGAEAKLASNWVTSDIVGYLKANKLSFSELKLSPENLAEMINMILKNTISGKIAKEILPELIKKNISPKKLVEEKGLAMISDSSSILPIINELINEYPNEVQAFRNGKTKLLGFFIGQLMKRTKGKADPKLANKLLAEKLNG.

This sequence belongs to the GatB/GatE family. GatB subfamily. As to quaternary structure, heterotrimer of A, B and C subunits.

It catalyses the reaction L-glutamyl-tRNA(Gln) + L-glutamine + ATP + H2O = L-glutaminyl-tRNA(Gln) + L-glutamate + ADP + phosphate + H(+). It carries out the reaction L-aspartyl-tRNA(Asn) + L-glutamine + ATP + H2O = L-asparaginyl-tRNA(Asn) + L-glutamate + ADP + phosphate + 2 H(+). Functionally, allows the formation of correctly charged Asn-tRNA(Asn) or Gln-tRNA(Gln) through the transamidation of misacylated Asp-tRNA(Asn) or Glu-tRNA(Gln) in organisms which lack either or both of asparaginyl-tRNA or glutaminyl-tRNA synthetases. The reaction takes place in the presence of glutamine and ATP through an activated phospho-Asp-tRNA(Asn) or phospho-Glu-tRNA(Gln). This chain is Aspartyl/glutamyl-tRNA(Asn/Gln) amidotransferase subunit B, found in Prochlorococcus marinus (strain MIT 9312).